The chain runs to 246 residues: MKFKVIALAALMGISGMAAQANELPDGPHIVTSGTASVDAVPDIATLAIEVNVAAKDAATAKKQADERVAQYISFLELNQIAKKDISSANLRTQPDYDYQDGKSILKGYRAVRTVEVTLRQLDKLNSLLDGALKAGLNEIRSVSLGVAQPDAYKDKARKAAIDNAIHQAQELANGFHRKLGPVYSVRYHVSNYQPSPMVRMMKADAAPVSAQETYEQAAIQFDDQVDVVFQLEPVDQQPAKTPAAQ.

This is an uncharacterized protein from Escherichia coli O157:H7.